The sequence spans 593 residues: Chromosomal replication initiator protein DnaA (593 aa).

Residues 1 to 71 are domain I, interacts with DnaA modulators; the sequence is MSDPCWEQCV…EIISNSDAGP (71 aa). Positions 71–256 are domain II; that stretch reads PKSLEIAVAQ…DVEGGIQHKH (186 aa). A disordered region spans residues 97–186; the sequence is AVPVPDPLPS…STESSADRER (90 aa). Residues 113 to 124 are compositionally biased toward polar residues; it reads SFQPPKGNTSAD. The segment at 257-473 is domain III, AAA+ region; it reads NLNTTFIFDN…GALKRVIANA (217 aa). The ATP site is built by Gly301, Gly303, Lys304, and Thr305. The domain IV, binds dsDNA stretch occupies residues 474-593; sequence QFTQRSISVE…VKNLLRTLTT (120 aa).

This sequence belongs to the DnaA family. As to quaternary structure, oligomerizes as a right-handed, spiral filament on DNA at oriC.

It is found in the cytoplasm. Its function is as follows. Plays an essential role in the initiation and regulation of chromosomal replication. ATP-DnaA binds to the origin of replication (oriC) to initiate formation of the DNA replication initiation complex once per cell cycle. Binds the DnaA box (a 9 base pair repeat at the origin) and separates the double-stranded (ds)DNA. Forms a right-handed helical filament on oriC DNA; dsDNA binds to the exterior of the filament while single-stranded (ss)DNA is stabiized in the filament's interior. The ATP-DnaA-oriC complex binds and stabilizes one strand of the AT-rich DNA unwinding element (DUE), permitting loading of DNA polymerase. After initiation quickly degrades to an ADP-DnaA complex that is not apt for DNA replication. Binds acidic phospholipids. The sequence is that of Chromosomal replication initiator protein DnaA from Teredinibacter turnerae (strain ATCC 39867 / T7901).